The chain runs to 704 residues: Elongation factor G (704 aa).

The 284-residue stretch at 8-291 (DKVRNIGIMA…TVVECLPSPV (284 aa)) folds into the tr-type G domain. GTP-binding positions include 17–24 (AHIDAGKT), 90–94 (DTPGH), and 144–147 (NKMD).

This sequence belongs to the TRAFAC class translation factor GTPase superfamily. Classic translation factor GTPase family. EF-G/EF-2 subfamily.

It is found in the cytoplasm. Functionally, catalyzes the GTP-dependent ribosomal translocation step during translation elongation. During this step, the ribosome changes from the pre-translocational (PRE) to the post-translocational (POST) state as the newly formed A-site-bound peptidyl-tRNA and P-site-bound deacylated tRNA move to the P and E sites, respectively. Catalyzes the coordinated movement of the two tRNA molecules, the mRNA and conformational changes in the ribosome. The chain is Elongation factor G from Prosthecochloris aestuarii (strain DSM 271 / SK 413).